Here is a 395-residue protein sequence, read N- to C-terminus: Chalcone synthase (395 aa).

Val2 carries the N-acetylvaline modification. Position 2 is an N-acetylalanine (Val2). The active site involves Cys169.

This sequence belongs to the thiolase-like superfamily. Chalcone/stilbene synthases family.

The catalysed reaction is (E)-4-coumaroyl-CoA + 3 malonyl-CoA + 3 H(+) = 2',4,4',6'-tetrahydroxychalcone + 3 CO2 + 4 CoA. Its pathway is secondary metabolite biosynthesis; flavonoid biosynthesis. Functionally, the primary product of this enzyme is 4,2',4',6'-tetrahydroxychalcone (also termed naringenin-chalcone or chalcone) which can under specific conditions spontaneously isomerize into naringenin. This is Chalcone synthase (CHS) from Arabidopsis thaliana (Mouse-ear cress).